Reading from the N-terminus, the 77-residue chain is Translational regulator CsrA (77 aa).

Residues 58 to 77 (ANRRTAEETLDQASRLLSQK) are disordered. Over residues 68-77 (DQASRLLSQK) the composition is skewed to polar residues.

The protein belongs to the CsrA/RsmA family. Homodimer; the beta-strands of each monomer intercalate to form a hydrophobic core, while the alpha-helices form wings that extend away from the core.

The protein localises to the cytoplasm. Functionally, a translational regulator that binds mRNA to regulate translation initiation and/or mRNA stability. Usually binds in the 5'-UTR at or near the Shine-Dalgarno sequence preventing ribosome-binding, thus repressing translation. Its main target seems to be the major flagellin gene, while its function is anatagonized by FliW. In Magnetococcus marinus (strain ATCC BAA-1437 / JCM 17883 / MC-1), this protein is Translational regulator CsrA.